A 174-amino-acid chain; its full sequence is Shikimate kinase (174 aa).

15–20 (GTGKST) is a binding site for ATP. Ser-19 lines the Mg(2+) pocket. Residues Asp-37, Arg-61, and Gly-82 each coordinate substrate. Residue Arg-120 coordinates ATP. Arg-138 contributes to the substrate binding site.

The protein belongs to the shikimate kinase family. In terms of assembly, monomer. The cofactor is Mg(2+).

The protein localises to the cytoplasm. The enzyme catalyses shikimate + ATP = 3-phosphoshikimate + ADP + H(+). It participates in metabolic intermediate biosynthesis; chorismate biosynthesis; chorismate from D-erythrose 4-phosphate and phosphoenolpyruvate: step 5/7. Functionally, catalyzes the specific phosphorylation of the 3-hydroxyl group of shikimic acid using ATP as a cosubstrate. The polypeptide is Shikimate kinase (Staphylococcus aureus (strain MRSA252)).